Reading from the N-terminus, the 220-residue chain is Superoxide dismutase [Fe] (220 aa).

The Fe cation site is built by His-26, His-73, Asp-164, and His-168.

The protein belongs to the iron/manganese superoxide dismutase family. As to quaternary structure, homodimer. It depends on Fe cation as a cofactor.

The enzyme catalyses 2 superoxide + 2 H(+) = H2O2 + O2. Functionally, destroys superoxide anion radicals which are normally produced within the cells and which are toxic to biological systems. The sequence is that of Superoxide dismutase [Fe] (sodB) from Campylobacter coli.